The following is a 249-amino-acid chain: Uridylate kinase (249 aa).

ATP is bound at residue 15 to 18 (KLSG). An involved in allosteric activation by GTP region spans residues 23–28 (GDEGFG). UMP is bound at residue Gly57. Residues Gly58 and Arg62 each coordinate ATP. Residues Asp77 and 138–145 (TGNPFFTT) each bind UMP. ATP-binding residues include Thr165, Tyr171, and Asp174.

Belongs to the UMP kinase family. Homohexamer.

The protein localises to the cytoplasm. It catalyses the reaction UMP + ATP = UDP + ADP. It participates in pyrimidine metabolism; CTP biosynthesis via de novo pathway; UDP from UMP (UMPK route): step 1/1. Allosterically activated by GTP. Inhibited by UTP. In terms of biological role, catalyzes the reversible phosphorylation of UMP to UDP. This chain is Uridylate kinase, found in Pseudoalteromonas translucida (strain TAC 125).